A 148-amino-acid polypeptide reads, in one-letter code: Ubiquitin-conjugating enzyme E2 10 (148 aa).

Residues 1–147 (MASKRILKEL…ARSWTQKYAM (147 aa)) enclose the UBC core domain. Cys-85 functions as the Glycyl thioester intermediate in the catalytic mechanism.

This sequence belongs to the ubiquitin-conjugating enzyme family. In terms of assembly, interacts with CHIP and the E3 ubiquitin ligase BB. Associates with the E3 ubiquitin ligase JMJ24. As to expression, ubiquitously expressed with the highest levels in rosette leaves, roots and petals.

It carries out the reaction S-ubiquitinyl-[E1 ubiquitin-activating enzyme]-L-cysteine + [E2 ubiquitin-conjugating enzyme]-L-cysteine = [E1 ubiquitin-activating enzyme]-L-cysteine + S-ubiquitinyl-[E2 ubiquitin-conjugating enzyme]-L-cysteine.. Its pathway is protein modification; protein ubiquitination. Its function is as follows. Accepts the ubiquitin from the E1 complex and catalyzes its covalent attachment to other proteins. Mediates the selective degradation of short-lived and abnormal proteins. This Arabidopsis thaliana (Mouse-ear cress) protein is Ubiquitin-conjugating enzyme E2 10.